Here is a 190-residue protein sequence, read N- to C-terminus: Crossover junction endodeoxyribonuclease RuvC (190 aa).

Catalysis depends on residues Asp8, Glu67, and Asp139. Asp8, Glu67, and Asp139 together coordinate Mg(2+).

Belongs to the RuvC family. Homodimer which binds Holliday junction (HJ) DNA. The HJ becomes 2-fold symmetrical on binding to RuvC with unstacked arms; it has a different conformation from HJ DNA in complex with RuvA. In the full resolvosome a probable DNA-RuvA(4)-RuvB(12)-RuvC(2) complex forms which resolves the HJ. It depends on Mg(2+) as a cofactor.

It localises to the cytoplasm. The catalysed reaction is Endonucleolytic cleavage at a junction such as a reciprocal single-stranded crossover between two homologous DNA duplexes (Holliday junction).. In terms of biological role, the RuvA-RuvB-RuvC complex processes Holliday junction (HJ) DNA during genetic recombination and DNA repair. Endonuclease that resolves HJ intermediates. Cleaves cruciform DNA by making single-stranded nicks across the HJ at symmetrical positions within the homologous arms, yielding a 5'-phosphate and a 3'-hydroxyl group; requires a central core of homology in the junction. The consensus cleavage sequence is 5'-(A/T)TT(C/G)-3'. Cleavage occurs on the 3'-side of the TT dinucleotide at the point of strand exchange. HJ branch migration catalyzed by RuvA-RuvB allows RuvC to scan DNA until it finds its consensus sequence, where it cleaves and resolves the cruciform DNA. The sequence is that of Crossover junction endodeoxyribonuclease RuvC from Haemophilus influenzae (strain PittEE).